Reading from the N-terminus, the 136-residue chain is Large ribosomal subunit protein uL16c (136 aa).

Residues 1 to 20 form a disordered region; that stretch reads MLSPKRTRFRKQHRGRMKGK.

It belongs to the universal ribosomal protein uL16 family. In terms of assembly, part of the 50S ribosomal subunit.

The protein localises to the plastid. The protein resides in the chloroplast. This chain is Large ribosomal subunit protein uL16c, found in Lolium perenne (Perennial ryegrass).